A 385-amino-acid polypeptide reads, in one-letter code: MSSSPVVSRDILEELQLYTAQNLEKLEVNKYYEVIRELGKGTYGKVDLVIHKIRGSKMALKFLKKKSTKLKSFLREYSISLYLSPCPFIINMFGIAFETDEYYVFAQEYAPSGDLFDIIPPQVGLPEPVAKRCVHQVAIALEYLHSKKLVHRDIKPENILIFDKECRKVKLSDFGMTRRAGSPVKRVSGTIPYTAPELCDTSKHDGFCVDYSTDVWAFGVLLFCMLTGNFPWEKAMPSDTFYEEFVRWQKRRTGAVPSQWRRFTDESLRMFRKLLALEQERRCSVKEVFAHLGHRWMLDGTSGNHHQSVLNSSSEEDELLVDRMKQQTLSPTANTSNAIEPGSANHFTSMSTNSSVSSTNSYERSARDSPPTSRILVTTPIEICV.

The region spanning 32–297 (YEVIRELGKG…VFAHLGHRWM (266 aa)) is the Protein kinase domain. ATP contacts are provided by residues 38–46 (LGKGTYGKV) and Lys-61. The active-site Proton acceptor is Asp-153. A compositionally biased stretch (polar residues) spans 328 to 338 (TLSPTANTSNA). The segment at 328–374 (TLSPTANTSNAIEPGSANHFTSMSTNSSVSSTNSYERSARDSPPTSR) is disordered. Over residues 348 to 361 (TSMSTNSSVSSTNS) the composition is skewed to low complexity.

It belongs to the protein kinase superfamily. Ser/Thr protein kinase family. In terms of tissue distribution, mainly expressed in brain.

It localises to the cytoplasm. The catalysed reaction is L-seryl-[protein] + ATP = O-phospho-L-seryl-[protein] + ADP + H(+). It carries out the reaction L-threonyl-[protein] + ATP = O-phospho-L-threonyl-[protein] + ADP + H(+). Its function is as follows. May be involved in the control of neuronal proliferation or migration in the brain of embryos. This chain is Serine/threonine-protein kinase SBK1 (sbk1), found in Danio rerio (Zebrafish).